The sequence spans 173 residues: Bifunctional protein PyrR (173 aa).

The PRPP-binding signature appears at 93 to 105; sequence VILVDDVLYTGRT.

It belongs to the purine/pyrimidine phosphoribosyltransferase family. PyrR subfamily. As to quaternary structure, homodimer and homohexamer; in equilibrium.

The catalysed reaction is UMP + diphosphate = 5-phospho-alpha-D-ribose 1-diphosphate + uracil. Regulates transcriptional attenuation of the pyrimidine nucleotide (pyr) operon by binding in a uridine-dependent manner to specific sites on pyr mRNA. This disrupts an antiterminator hairpin in the RNA and favors formation of a downstream transcription terminator, leading to a reduced expression of downstream genes. Its function is as follows. Also displays a weak uracil phosphoribosyltransferase activity which is not physiologically significant. The polypeptide is Bifunctional protein PyrR (Streptococcus pneumoniae (strain 70585)).